The primary structure comprises 275 residues: tRNA pseudouridine synthase A (275 aa).

The active-site Nucleophile is the Asp62. Tyr124 serves as a coordination point for substrate.

The protein belongs to the tRNA pseudouridine synthase TruA family. In terms of assembly, homodimer.

It catalyses the reaction uridine(38/39/40) in tRNA = pseudouridine(38/39/40) in tRNA. Its function is as follows. Formation of pseudouridine at positions 38, 39 and 40 in the anticodon stem and loop of transfer RNAs. The protein is tRNA pseudouridine synthase A of Herminiimonas arsenicoxydans.